Consider the following 273-residue polypeptide: 4-hydroxy-3-methylbut-2-enyl diphosphate reductase (273 aa).

Cysteine 12 contributes to the [4Fe-4S] cluster binding site. The (2E)-4-hydroxy-3-methylbut-2-enyl diphosphate site is built by histidine 36 and histidine 70. The dimethylallyl diphosphate site is built by histidine 36 and histidine 70. Isopentenyl diphosphate contacts are provided by histidine 36 and histidine 70. [4Fe-4S] cluster is bound at residue cysteine 92. Histidine 120 serves as a coordination point for (2E)-4-hydroxy-3-methylbut-2-enyl diphosphate. Dimethylallyl diphosphate is bound at residue histidine 120. Position 120 (histidine 120) interacts with isopentenyl diphosphate. Glutamate 122 acts as the Proton donor in catalysis. Position 157 (threonine 157) interacts with (2E)-4-hydroxy-3-methylbut-2-enyl diphosphate. Cysteine 185 contributes to the [4Fe-4S] cluster binding site. 4 residues coordinate (2E)-4-hydroxy-3-methylbut-2-enyl diphosphate: serine 213, serine 214, asparagine 215, and serine 257. Dimethylallyl diphosphate contacts are provided by serine 213, serine 214, asparagine 215, and serine 257. 4 residues coordinate isopentenyl diphosphate: serine 213, serine 214, asparagine 215, and serine 257.

This sequence belongs to the IspH family. [4Fe-4S] cluster serves as cofactor.

The enzyme catalyses isopentenyl diphosphate + 2 oxidized [2Fe-2S]-[ferredoxin] + H2O = (2E)-4-hydroxy-3-methylbut-2-enyl diphosphate + 2 reduced [2Fe-2S]-[ferredoxin] + 2 H(+). It catalyses the reaction dimethylallyl diphosphate + 2 oxidized [2Fe-2S]-[ferredoxin] + H2O = (2E)-4-hydroxy-3-methylbut-2-enyl diphosphate + 2 reduced [2Fe-2S]-[ferredoxin] + 2 H(+). It functions in the pathway isoprenoid biosynthesis; dimethylallyl diphosphate biosynthesis; dimethylallyl diphosphate from (2E)-4-hydroxy-3-methylbutenyl diphosphate: step 1/1. The protein operates within isoprenoid biosynthesis; isopentenyl diphosphate biosynthesis via DXP pathway; isopentenyl diphosphate from 1-deoxy-D-xylulose 5-phosphate: step 6/6. In terms of biological role, catalyzes the conversion of 1-hydroxy-2-methyl-2-(E)-butenyl 4-diphosphate (HMBPP) into a mixture of isopentenyl diphosphate (IPP) and dimethylallyl diphosphate (DMAPP). Acts in the terminal step of the DOXP/MEP pathway for isoprenoid precursor biosynthesis. In Helicobacter hepaticus (strain ATCC 51449 / 3B1), this protein is 4-hydroxy-3-methylbut-2-enyl diphosphate reductase.